Consider the following 292-residue polypeptide: Ribosome-inactivating protein saporin-2 (292 aa).

Positions 1-24 (MKIYVVATIAWILLQFSAWTTTDA) are cleaved as a signal peptide. E200 is a catalytic residue.

The protein belongs to the ribosome-inactivating protein family. Type 1 RIP subfamily.

It catalyses the reaction Endohydrolysis of the N-glycosidic bond at one specific adenosine on the 28S rRNA.. Its function is as follows. Ribosome-inactivating protein of type 1, inhibits protein synthesis in animal cells. Useful as immunotoxin for pharmacological applications. The polypeptide is Ribosome-inactivating protein saporin-2 (SAP2) (Saponaria officinalis (Common soapwort)).